We begin with the raw amino-acid sequence, 269 residues long: Triosephosphate isomerase (269 aa).

8 to 10 (NWK) contacts substrate. Residue His105 is the Electrophile of the active site. Residue Glu183 is the Proton acceptor of the active site. Residues Gly189, Ser227, and 248–249 (GG) contribute to the substrate site.

This sequence belongs to the triosephosphate isomerase family. Homodimer.

Its subcellular location is the cytoplasm. The catalysed reaction is D-glyceraldehyde 3-phosphate = dihydroxyacetone phosphate. It participates in carbohydrate biosynthesis; gluconeogenesis. Its pathway is carbohydrate degradation; glycolysis; D-glyceraldehyde 3-phosphate from glycerone phosphate: step 1/1. Functionally, involved in the gluconeogenesis. Catalyzes stereospecifically the conversion of dihydroxyacetone phosphate (DHAP) to D-glyceraldehyde-3-phosphate (G3P). The chain is Triosephosphate isomerase from Psychrobacter cryohalolentis (strain ATCC BAA-1226 / DSM 17306 / VKM B-2378 / K5).